A 191-amino-acid polypeptide reads, in one-letter code: Calcium-activated potassium channel subunit beta-1 (191 aa).

At 1 to 18 (MVKKLVMAQKRGETRALC) the chain is on the cytoplasmic side. The helical transmembrane segment at 19–39 (LGVTMVVCAVITYYILVTTVL) threads the bilayer. The Extracellular segment spans residues 40–157 (PLYQKSVWTQ…FQRLYGPQAL (118 aa)). 2 N-linked (GlcNAc...) asparagine glycosylation sites follow: N80 and N142. A helical transmembrane segment spans residues 158–178 (LFSLFWPTFLLTGGLLIIAMV). The Cytoplasmic portion of the chain corresponds to 179-191 (KSNQYLSILAAQK).

The protein belongs to the KCNMB (TC 8.A.14.1) family. KCNMB1 subfamily. In terms of assembly, interacts with KCNMA1 tetramer. There are probably 4 molecules of KCMNB1 per KCNMA1 tetramer. In terms of processing, N-glycosylated. Abundantly expressed in smooth muscle. Low levels of expression in most other tissues. Within the brain, relatively high levels found in hippocampus and corpus callosum.

Its subcellular location is the membrane. Its function is as follows. Regulatory subunit of the calcium activated potassium KCNMA1 (maxiK) channel. Modulates the calcium sensitivity and gating kinetics of KCNMA1, thereby contributing to KCNMA1 channel diversity. Increases the apparent Ca(2+)/voltage sensitivity of the KCNMA1 channel. It also modifies KCNMA1 channel kinetics and alters its pharmacological properties. It slows down the activation and the deactivation kinetics of the channel. Acts as a negative regulator of smooth muscle contraction by enhancing the calcium sensitivity to KCNMA1. Its presence is also a requirement for internal binding of the KCNMA1 channel opener dehydrosoyasaponin I (DHS-1) triterpene glycoside and for external binding of the agonist hormone 17-beta-estradiol (E2). Increases the binding activity of charybdotoxin (CTX) toxin to KCNMA1 peptide blocker by increasing the CTX association rate and decreasing the dissociation rate. The sequence is that of Calcium-activated potassium channel subunit beta-1 (KCNMB1) from Homo sapiens (Human).